We begin with the raw amino-acid sequence, 210 residues long: Histidine biosynthesis bifunctional protein HisIE (210 aa).

The interval 1–106 (MTNYKIDFSK…SCFNTEVPFS (106 aa)) is phosphoribosyl-AMP cyclohydrolase. The tract at residues 107–210 (VQTLAQTVQD…KGERQNIEQW (104 aa)) is phosphoribosyl-ATP pyrophosphohydrolase.

The protein in the N-terminal section; belongs to the PRA-CH family. In the C-terminal section; belongs to the PRA-PH family.

The protein localises to the cytoplasm. It carries out the reaction 1-(5-phospho-beta-D-ribosyl)-ATP + H2O = 1-(5-phospho-beta-D-ribosyl)-5'-AMP + diphosphate + H(+). The catalysed reaction is 1-(5-phospho-beta-D-ribosyl)-5'-AMP + H2O = 1-(5-phospho-beta-D-ribosyl)-5-[(5-phospho-beta-D-ribosylamino)methylideneamino]imidazole-4-carboxamide. It participates in amino-acid biosynthesis; L-histidine biosynthesis; L-histidine from 5-phospho-alpha-D-ribose 1-diphosphate: step 2/9. It functions in the pathway amino-acid biosynthesis; L-histidine biosynthesis; L-histidine from 5-phospho-alpha-D-ribose 1-diphosphate: step 3/9. This Staphylococcus aureus (strain COL) protein is Histidine biosynthesis bifunctional protein HisIE (hisI).